The following is a 104-amino-acid chain: Thioredoxin-3 (104 aa).

The region spanning 2 to 104 (SKVIHVTSNE…TLRSTLEANI (103 aa)) is the Thioredoxin domain. Catalysis depends on nucleophile residues cysteine 31 and cysteine 34. Cysteine 31 and cysteine 34 form a disulfide bridge.

This sequence belongs to the thioredoxin family.

Its function is as follows. Participates in various redox reactions through the reversible oxidation of its active center dithiol to a disulfide and catalyzes dithiol-disulfide exchange reactions. The polypeptide is Thioredoxin-3 (trxC) (Dictyostelium discoideum (Social amoeba)).